We begin with the raw amino-acid sequence, 173 residues long: Transcription factor S-II-related protein (173 aa).

Residues 9–129 (ISDKEREIVI…EETLNQMATV (121 aa)) form the TFIIS central domain. Residues 130 to 170 (EWKPCYACKNTSYHFYQLQTRSADEPMTTFYICKNCMKTYK) form a TFIIS-type zinc finger. Zn(2+)-binding residues include Cys-134, Cys-137, Cys-162, and Cys-165.

The protein belongs to the TFS-II family.

This chain is Transcription factor S-II-related protein, found in Acanthamoeba polyphaga mimivirus (APMV).